The sequence spans 82 residues: Modifier of protein aggregation 4 (82 aa).

A compositionally biased stretch (basic and acidic residues) spans methionine 1 to lysine 23. 2 disordered regions span residues methionine 1–arginine 41 and glutamate 63–methionine 82.

The protein belongs to the SERF family.

It localises to the cytoplasm. It is found in the cytosol. The protein resides in the nucleus. Positive regulator of protein aggregation and age-related proteotoxicity. Induces conformational changes in aggregation-prone proteins, driving them into compact formations preceding the formation of aggregates. The sequence is that of Modifier of protein aggregation 4 from Caenorhabditis elegans.